A 431-amino-acid chain; its full sequence is Histidine--tRNA ligase (431 aa).

Belongs to the class-II aminoacyl-tRNA synthetase family. Homodimer.

It localises to the cytoplasm. It carries out the reaction tRNA(His) + L-histidine + ATP = L-histidyl-tRNA(His) + AMP + diphosphate + H(+). The protein is Histidine--tRNA ligase of Ligilactobacillus salivarius (strain UCC118) (Lactobacillus salivarius).